The following is a 352-amino-acid chain: Maleylacetate reductase (352 aa).

Belongs to the iron-containing alcohol dehydrogenase family.

The catalysed reaction is 3-oxoadipate + NAD(+) = maleylacetate + NADH + H(+). The enzyme catalyses 3-oxoadipate + NADP(+) = maleylacetate + NADPH + H(+). The protein operates within aromatic compound metabolism; 3-chlorocatechol degradation. The protein is Maleylacetate reductase (clcE) of Pseudomonas knackmussii (strain DSM 6978 / CCUG 54928 / LMG 23759 / B13).